The following is a 694-amino-acid chain: Elongation factor G (694 aa).

One can recognise a tr-type G domain in the interval 10–285; sequence EKTRNIGIMA…GVVDYLPSPL (276 aa). Residues 19 to 26, 83 to 87, and 137 to 140 contribute to the GTP site; these read AHIDAGKT, DTPGH, and NKMD.

This sequence belongs to the TRAFAC class translation factor GTPase superfamily. Classic translation factor GTPase family. EF-G/EF-2 subfamily.

It is found in the cytoplasm. Functionally, catalyzes the GTP-dependent ribosomal translocation step during translation elongation. During this step, the ribosome changes from the pre-translocational (PRE) to the post-translocational (POST) state as the newly formed A-site-bound peptidyl-tRNA and P-site-bound deacylated tRNA move to the P and E sites, respectively. Catalyzes the coordinated movement of the two tRNA molecules, the mRNA and conformational changes in the ribosome. This chain is Elongation factor G, found in Lactobacillus delbrueckii subsp. bulgaricus (strain ATCC BAA-365 / Lb-18).